Consider the following 1282-residue polypeptide: Myosin-1 (1282 aa).

The interval 1 to 30 (MAISKKAGAKKAGAVSKPPPSKGASSKGGV) is disordered. Residues 44 to 723 (AGVSDMTLLS…TLFALETMRD (680 aa)) enclose the Myosin motor domain. Position 137–144 (137–144 (GESGAGKT)) interacts with ATP. S365 carries the phosphoserine modification. An actin-binding region spans residues 412–494 (VIGVLDIYGF…PGIFSALNDA (83 aa)). Positions 569–590 (LQKLFPDRPDPNSKKRPPTAGD) are disordered. 2 IQ domains span residues 727–747 (HNMA…KEEC) and 748–773 (ARRI…YGHQ). The region spanning 781-977 (RRRFSLLGLR…AVSVCSGEPA (197 aa)) is the TH1 domain. The interval 973 to 1073 (SGEPANSVSR…PPPAAVAPSE (101 aa)) is disordered. Positions 1029-1058 (PGSGAAGTARPAAAVGSASAGAGVGATRSA) are enriched in low complexity. Residues 1059–1068 (PRPPPPPPAA) are compositionally biased toward pro residues. Positions 1074–1135 (PQVARYKALY…PSNYLELIVQ (62 aa)) constitute an SH3 domain. Residues 1237-1282 (AAAAAAGAGANGKGAGAPPAVAAKPVVAPKPAGSNGRAMPPPPPRR) form a disordered region. Residues 1252 to 1269 (GAPPAVAAKPVVAPKPAG) show a composition bias toward low complexity.

The protein belongs to the TRAFAC class myosin-kinesin ATPase superfamily. Myosin family. In terms of processing, phosphorylation of the TEDS site (Ser-365) is required for the polarization of the actin cytoskeleton. Phosphorylation probably activates the myosin-I ATPase activity.

Its subcellular location is the cytoplasm. The protein localises to the cytoskeleton. It is found in the actin patch. Type-I myosin implicated in the organization of the actin cytoskeleton. Required for proper actin cytoskeleton polarization. At the cell cortex, assembles in patch-like structures together with proteins from the actin-polymerizing machinery and promotes actin assembly. Functions as actin nucleation-promoting factor (NPF) for the Arp2/3 complex. The polypeptide is Myosin-1 (myo1) (Mycosarcoma maydis (Corn smut fungus)).